We begin with the raw amino-acid sequence, 275 residues long: NH(3)-dependent NAD(+) synthetase (275 aa).

An ATP-binding site is contributed by 46-53; the sequence is GISGGQDS. Aspartate 52 serves as a coordination point for Mg(2+). Residue arginine 140 coordinates deamido-NAD(+). Threonine 160 lines the ATP pocket. A Mg(2+)-binding site is contributed by glutamate 165. Deamido-NAD(+) contacts are provided by lysine 173 and aspartate 180. ATP-binding residues include lysine 189 and threonine 211. 260-261 provides a ligand contact to deamido-NAD(+); sequence HK.

It belongs to the NAD synthetase family. In terms of assembly, homodimer.

The enzyme catalyses deamido-NAD(+) + NH4(+) + ATP = AMP + diphosphate + NAD(+) + H(+). The protein operates within cofactor biosynthesis; NAD(+) biosynthesis; NAD(+) from deamido-NAD(+) (ammonia route): step 1/1. Its function is as follows. Catalyzes the ATP-dependent amidation of deamido-NAD to form NAD. Uses ammonia as a nitrogen source. The polypeptide is NH(3)-dependent NAD(+) synthetase (Shigella flexneri serotype 5b (strain 8401)).